The sequence spans 197 residues: Transcription factor FapR (197 aa).

Belongs to the FapR family.

Transcriptional factor involved in regulation of membrane lipid biosynthesis by repressing genes involved in fatty acid and phospholipid metabolism. This is Transcription factor FapR from Bacillus cereus (strain 03BB102).